An 803-amino-acid chain; its full sequence is Volume-regulated anion channel subunit LRRC8C (803 aa).

At 1–22 (MIPVTEFRQFSEQQPAFRVLKP) the chain is on the cytoplasmic side. Residues 23–43 (WWDVFTDYLSVAMLMIGVFGC) traverse the membrane as a helical segment. At 44 to 125 (TLQVMQDKII…YERALHWYAK (82 aa)) the chain is on the extracellular side. Disulfide bonds link Cys-54–Cys-308 and Cys-115–Cys-293. N-linked (GlcNAc...) asparagine glycosylation is found at Asn-64 and Asn-70. Residues 126-146 (YFPYLVLIHTLVFMLCSNFWF) traverse the membrane as a helical segment. Residues 147–266 (KFPGSSSKIE…ILYAMYVRQT (120 aa)) are Cytoplasmic-facing. A disordered region spans residues 177-209 (EVSGEDSEEKDNRKNNMSRSNTTQSGPEGSLVN). Polar residues predominate over residues 191–209 (NNMSRSNTTQSGPEGSLVN). A phosphoserine mark is found at Ser-212 and Ser-215. Residues 267–287 (VLKVIKFLIIIAYNSALVSKV) form a helical membrane-spanning segment. Over 288–320 (QFTVDCNVDIQDMTGYKNFSCNHTMAHLFSKLS) the chain is Extracellular. The chain crosses the membrane as a helical span at residues 321-341 (FCYLCFVSIYGLTCLYTLYWL). Residues 342 to 803 (FYRSLKEYSF…SDVREQMKTE (462 aa)) are Cytoplasmic-facing. 17 LRR repeats span residues 397 to 419 (ENKL…QKLQ), 420 to 443 (TNAH…VFEI), 446 to 465 (LQSL…TIAQ), 468 to 490 (NLQE…SFLK), 492 to 513 (NLKV…MYGL), 515 to 536 (NLEE…VTLE), 543 to 563 (SLKI…VVDV), 566 to 586 (HLQK…NNLK), 590 to 611 (NLTE…VFSL), 613 to 634 (SLQE…VSFQ), 638 to 659 (KLTV…IKKL), 661 to 682 (SLER…LFLC), 684 to 705 (KIRY…IGVL), 707 to 728 (SLQY…LYFC), 730 to 751 (KLKT…IGNL), 753 to 774 (FLSY…LGDC), and 776 to 799 (ALKR…VREQ).

Belongs to the LRRC8 family. In terms of assembly, heterohexamer; oligomerizes with other LRRC8 proteins (LRRC8A, LRRC8B, LRRC8D and/or LRRC8E) to form a heterohexamer. Homoheptamer; inactive, likely because it is not targeted to the plasma membrane in the absence of LRRC8A. In vivo, the subunit composition may depend primarily on expression levels, and heterooligomeric channels containing various proportions of the different LRRC8 proteins may coexist.

The protein resides in the cell membrane. It is found in the endoplasmic reticulum membrane. The enzyme catalyses chloride(in) = chloride(out). The catalysed reaction is iodide(out) = iodide(in). It catalyses the reaction taurine(out) = taurine(in). It carries out the reaction 2',3'-cGAMP(out) = 2',3'-cGAMP(in). Non-essential component of the volume-regulated anion channel (VRAC, also named VSOAC channel), an anion channel required to maintain a constant cell volume in response to extracellular or intracellular osmotic changes. The VRAC channel conducts iodide better than chloride and can also conduct organic osmolytes like taurine. Plays a redundant role in the efflux of amino acids, such as aspartate and glutamate, in response to osmotic stress. The VRAC channel also mediates transport of immunoreactive cyclic dinucleotide GMP-AMP (2'-3'-cGAMP), an immune messenger produced in response to DNA virus in the cytosol. Channel activity requires LRRC8A plus at least one other family member (LRRC8B, LRRC8C, LRRC8D or LRRC8E); channel characteristics depend on the precise subunit composition. The sequence is that of Volume-regulated anion channel subunit LRRC8C from Bos taurus (Bovine).